We begin with the raw amino-acid sequence, 798 residues long: Phenylalanine--tRNA ligase beta subunit (798 aa).

Positions 39–148 (FDAIEPIVVG…ESFRIGARLV (110 aa)) constitute a tRNA-binding domain. Residues 402-478 (WQAPVLRFRR…RVRGMDTIEP (77 aa)) form the B5 domain. Positions 456, 462, 465, and 466 each coordinate Mg(2+). One can recognise an FDX-ACB domain in the interval 708 to 798 (PVYPPVRRDI…SLVEKLPVRI (91 aa)).

This sequence belongs to the phenylalanyl-tRNA synthetase beta subunit family. Type 1 subfamily. As to quaternary structure, tetramer of two alpha and two beta subunits. Mg(2+) is required as a cofactor.

The protein localises to the cytoplasm. The catalysed reaction is tRNA(Phe) + L-phenylalanine + ATP = L-phenylalanyl-tRNA(Phe) + AMP + diphosphate + H(+). This is Phenylalanine--tRNA ligase beta subunit from Nitratidesulfovibrio vulgaris (strain ATCC 29579 / DSM 644 / CCUG 34227 / NCIMB 8303 / VKM B-1760 / Hildenborough) (Desulfovibrio vulgaris).